Here is a 94-residue protein sequence, read N- to C-terminus: CRISPR-associated endoribonuclease Cas2 1 (94 aa).

Asp8 serves as a coordination point for Mg(2+).

This sequence belongs to the CRISPR-associated endoribonuclease Cas2 protein family. In terms of assembly, homodimer, forms a heterotetramer with a Cas1 homodimer. It depends on Mg(2+) as a cofactor.

CRISPR (clustered regularly interspaced short palindromic repeat), is an adaptive immune system that provides protection against mobile genetic elements (viruses, transposable elements and conjugative plasmids). CRISPR clusters contain sequences complementary to antecedent mobile elements and target invading nucleic acids. CRISPR clusters are transcribed and processed into CRISPR RNA (crRNA). Functions as a ssRNA-specific endoribonuclease. Involved in the integration of spacer DNA into the CRISPR cassette. The protein is CRISPR-associated endoribonuclease Cas2 1 of Synechocystis sp. (strain ATCC 27184 / PCC 6803 / Kazusa).